The chain runs to 498 residues: Thiamine transporter 1 (498 aa).

Methionine 1 carries the N-acetylmethionine modification. Residues 1–28 are Cytoplasmic-facing; sequence MDVPARVSRRAAAAAARMLLRTARVPRE. A helical membrane pass occupies residues 29–46; the sequence is CWFLPTALLCAYGFFANL. Over 47–71 the chain is Extracellular; that stretch reads RPSEPFLTPYLLGPDKNLTERQVYN. N-linked (GlcNAc...) asparagine glycosylation is present at asparagine 63. Residues 72-92 form a helical membrane-spanning segment; the sequence is EIYPVWTYSYLLLLFPVFLAT. The Cytoplasmic segment spans residues 93 to 105; it reads DYLRYKPVILLQG. The chain crosses the membrane as a helical span at residues 106 to 126; it reads LSLIVTWFMLLYAQGLLAIQF. Residues 127-128 lie on the Extracellular side of the membrane; it reads LE. A helical membrane pass occupies residues 129–149; it reads FFYGIATATEIAYYSYIYTVV. Residues 150 to 164 lie on the Cytoplasmic side of the membrane; sequence DLGMYQKVTSYCRSA. Residues 165-185 traverse the membrane as a helical segment; sequence TLVGFTVGSVLGQILVSVVGW. Serine 186 is a topological domain (extracellular). The helical transmembrane segment at 187–207 threads the bilayer; it reads LFSLNVISLTCVSVAFAVAWF. Over 208–295 the chain is Cytoplasmic; the sequence is LPMPQKSLFF…DFLMCYSSRP (88 aa). At serine 222 the chain carries Phosphoserine. Residues 296 to 316 form a helical membrane-spanning segment; that stretch reads LLCWSVWWALSTCGYFQVVNY. The Extracellular segment spans residues 317–334; that stretch reads AQGLWEKVMPSQNADIYN. Residues 335–355 traverse the membrane as a helical segment; the sequence is GGVEAVSTLLGASAVFAVGYI. At 356 to 360 the chain is on the cytoplasmic side; it reads KLSWS. The chain crosses the membrane as a helical span at residues 361-381; sequence TWGEMTLFLCSLLIAAAVYVM. Residues 382 to 386 lie on the Extracellular side of the membrane; that stretch reads DTVQS. Residues 387–407 form a helical membrane-spanning segment; that stretch reads IWVCYASYVVFRIIYMVLITI. Residues 408–423 lie on the Cytoplasmic side of the membrane; that stretch reads ATFQIAANLSMERYAL. A helical membrane pass occupies residues 424–444; that stretch reads VFGVNTFIALALQTLLTLIVV. Over 445-456 the chain is Extracellular; sequence DARGLGLCITTQ. Residues 457–477 form a helical membrane-spanning segment; the sequence is FLIYASYFAAISVVFLANGIV. The Cytoplasmic segment spans residues 478–498; that stretch reads SIIKKCRKQEDPSSSPQASTS.

The protein belongs to the reduced folate carrier (RFC) transporter (TC 2.A.48) family. As to quaternary structure, interacts with TSPAN1; this interaction increases the stability of SLC19A2. Interacts with TMEM63B. In terms of tissue distribution, expressed in liver. Expressed in cochlear hair cells and duodenum (at protein level). Detected in pancreatic acinar cells (at protein level). Also expressed strongly in pancreatic islet cells. Expressed in the testis. Very highly expressed in liver, and also detected at lower levels in heart, testis, kidney, brain and spleen. As to expression, expressed at low levels in liver and spleen.

It is found in the cell membrane. It catalyses the reaction thiamine(out) + H(+)(in) = thiamine(in) + H(+)(out). The enzyme catalyses pyridoxine(out) + n H(+)(out) = pyridoxine(in) + n H(+)(in). In terms of biological role, high-affinity transporter for the intake of thiamine. Essential for spermatogenesis. Mediates H(+)-dependent pyridoxine transport. This chain is Thiamine transporter 1, found in Mus musculus (Mouse).